We begin with the raw amino-acid sequence, 364 residues long: UDP-N-acetylglucosamine--N-acetylmuramyl-(pentapeptide) pyrophosphoryl-undecaprenol N-acetylglucosamine transferase (364 aa).

UDP-N-acetyl-alpha-D-glucosamine is bound by residues 10 to 12 (TGG), Asn-128, Arg-170, Ser-199, Ile-250, and Gln-295.

Belongs to the glycosyltransferase 28 family. MurG subfamily.

The protein resides in the cell inner membrane. It carries out the reaction di-trans,octa-cis-undecaprenyl diphospho-N-acetyl-alpha-D-muramoyl-L-alanyl-D-glutamyl-meso-2,6-diaminopimeloyl-D-alanyl-D-alanine + UDP-N-acetyl-alpha-D-glucosamine = di-trans,octa-cis-undecaprenyl diphospho-[N-acetyl-alpha-D-glucosaminyl-(1-&gt;4)]-N-acetyl-alpha-D-muramoyl-L-alanyl-D-glutamyl-meso-2,6-diaminopimeloyl-D-alanyl-D-alanine + UDP + H(+). The protein operates within cell wall biogenesis; peptidoglycan biosynthesis. In terms of biological role, cell wall formation. Catalyzes the transfer of a GlcNAc subunit on undecaprenyl-pyrophosphoryl-MurNAc-pentapeptide (lipid intermediate I) to form undecaprenyl-pyrophosphoryl-MurNAc-(pentapeptide)GlcNAc (lipid intermediate II). The protein is UDP-N-acetylglucosamine--N-acetylmuramyl-(pentapeptide) pyrophosphoryl-undecaprenol N-acetylglucosamine transferase of Chlorobium limicola (strain DSM 245 / NBRC 103803 / 6330).